A 137-amino-acid polypeptide reads, in one-letter code: Secreted RxLR effector protein 67 (137 aa).

The N-terminal stretch at 1-18 is a signal peptide; the sequence is MRLYILVLAAIAVTLVFA. The short motif at 32–61 is the RxLR-dEER element; the sequence is RALRQASITDEKSDDSLNAQAPPLSKSEKR. Residues 40-65 are disordered; sequence TDEKSDDSLNAQAPPLSKSEKRLSRS. A helical membrane pass occupies residues 114–134; sequence WFVRMILEAGIFWAVFHCLSA.

Belongs to the RxLR effector family.

It is found in the secreted. The protein resides in the host cytoplasm. It localises to the host nucleus. Its subcellular location is the membrane. In terms of biological role, effector that partially suppresses the tobacco programmed cell death induced by cell death-inducing proteins. The chain is Secreted RxLR effector protein 67 from Plasmopara viticola (Downy mildew of grapevine).